The sequence spans 141 residues: ATP synthase F(0) complex subunit C2, mitochondrial (141 aa).

The transit peptide at 1–66 (MYACSKFVST…RSFQTSAISR (66 aa)) directs the protein to the mitochondrion. A helical membrane pass occupies residues 82-102 (VGVAGSGAGIGTVFGSLIIGY). At Lys109 the chain carries N6,N6,N6-trimethyllysine. A helical transmembrane segment spans residues 117 to 137 (ILGFALSEAMGLFCLMVAFLI).

Belongs to the ATPase C chain family. As to quaternary structure, F-type ATPases have 2 components, CF(1) - the catalytic core - and CF(0) - the membrane proton channel. CF(1) has five subunits: alpha(3), beta(3), gamma(1), delta(1), epsilon(1). CF(0) has three main subunits: a, b and c. Interacts with DNAJC30; interaction is direct. Trimethylated by ATPSCKMT at Lys-109. Methylation is required for proper incorporation of the C subunit into the ATP synthase complex and mitochondrial respiration.

It is found in the mitochondrion membrane. Its function is as follows. Mitochondrial membrane ATP synthase (F(1)F(0) ATP synthase or Complex V) produces ATP from ADP in the presence of a proton gradient across the membrane which is generated by electron transport complexes of the respiratory chain. F-type ATPases consist of two structural domains, F(1) - containing the extramembraneous catalytic core and F(0) - containing the membrane proton channel, linked together by a central stalk and a peripheral stalk. During catalysis, ATP synthesis in the catalytic domain of F(1) is coupled via a rotary mechanism of the central stalk subunits to proton translocation. Part of the complex F(0) domain. A homomeric c-ring of probably 10 subunits is part of the complex rotary element. This Rattus norvegicus (Rat) protein is ATP synthase F(0) complex subunit C2, mitochondrial.